A 1557-amino-acid polypeptide reads, in one-letter code: DVA-1 polyprotein (1557 aa).

Positions 1–21 (MKSTSFITLLLLSYFIVEAHS) are cleaved as a signal peptide. Residues 22–60 (SIFHWDDERLFKHDDTHSWLTDVQKAELETLKHQPIQLR) constitute a propeptide that is removed on maturation. A glycan (N-linked (GlcNAc...) asparagine) is linked at Asn997.

Belongs to the NPA family. Post-translationally, nematode polyprotein allergens (NPAs) are synthesized as large polypeptides that are subsequently proteolytically cleaved to active polypeptide units.

Has high binding affinity for fatty acids and retinoids. The sequence is that of DVA-1 polyprotein (DVA-1) from Dictyocaulus viviparus (Bovine lungworm).